Reading from the N-terminus, the 114-residue chain is Large ribosomal subunit protein P2v (114 aa).

Positions 74-114 (VASGGGGGAAPAAEPASVESKKKEEEKEESEDDGGMMSLFD) are disordered. Serine 103 carries the post-translational modification Phosphoserine.

Belongs to the eukaryotic ribosomal protein P1/P2 family. As to quaternary structure, P1 and P2 exist as dimers at the large ribosomal subunit. In terms of processing, phosphorylated.

Functionally, plays an important role in the elongation step of protein synthesis. This chain is Large ribosomal subunit protein P2v (RPP2E), found in Arabidopsis thaliana (Mouse-ear cress).